Consider the following 325-residue polypeptide: Fructose-1,6-bisphosphatase class 1 (325 aa).

Positions 84, 103, 105, and 106 each coordinate Mg(2+). Substrate contacts are provided by residues 106–109, N196, and K262; that span reads DGSS. E268 provides a ligand contact to Mg(2+).

Belongs to the FBPase class 1 family. In terms of assembly, homotetramer. The cofactor is Mg(2+).

It localises to the cytoplasm. The catalysed reaction is beta-D-fructose 1,6-bisphosphate + H2O = beta-D-fructose 6-phosphate + phosphate. It participates in carbohydrate biosynthesis; gluconeogenesis. This is Fructose-1,6-bisphosphatase class 1 from Shewanella oneidensis (strain ATCC 700550 / JCM 31522 / CIP 106686 / LMG 19005 / NCIMB 14063 / MR-1).